The following is a 285-amino-acid chain: 3-methyl-2-oxobutanoate hydroxymethyltransferase (285 aa).

A disordered region spans residues 1–22; the sequence is MSEHNVYGAAQPAQPGQPAQPR. Residues 8-21 show a composition bias toward low complexity; sequence GAAQPAQPGQPAQP. Mg(2+) contacts are provided by D66 and D105. Residues 66–67, D105, and K135 contribute to the 3-methyl-2-oxobutanoate site; that span reads DS. E137 is a binding site for Mg(2+). Residue E203 is the Proton acceptor of the active site.

It belongs to the PanB family. Homodecamer; pentamer of dimers. The cofactor is Mg(2+).

The protein resides in the cytoplasm. The catalysed reaction is 3-methyl-2-oxobutanoate + (6R)-5,10-methylene-5,6,7,8-tetrahydrofolate + H2O = 2-dehydropantoate + (6S)-5,6,7,8-tetrahydrofolate. Its pathway is cofactor biosynthesis; (R)-pantothenate biosynthesis; (R)-pantoate from 3-methyl-2-oxobutanoate: step 1/2. Catalyzes the reversible reaction in which hydroxymethyl group from 5,10-methylenetetrahydrofolate is transferred onto alpha-ketoisovalerate to form ketopantoate. This chain is 3-methyl-2-oxobutanoate hydroxymethyltransferase, found in Mycolicibacterium paratuberculosis (strain ATCC BAA-968 / K-10) (Mycobacterium paratuberculosis).